A 417-amino-acid chain; its full sequence is MAEIKNYTLNFGPQHPAAHGVLRLILELDGEVIQRADPHIGLLHRATEKLAESKTYIQSLPYMDRLDYVSMMCNEHAYCLAIEKLLGVDVPVRAQYIRVMFSEITRILNHLLWIGAHGLDCGAMNILIYAFREREDLFDMYEAVSGARMHAAYFRPGGVYRDLPDTMPQYRVSKIRNAKALAKMNENRQGSLLDFIEDFCRRFPKNVDDYETLLTDNRIWKQRTVGIGVVTPERALNLGFTGPMLRGSGIAWDLRKTQPYDVYDRVDFDIPVGAGGDCYDRYLVRVEELRQSNRIIQQCAAWLRANPGPVITDNHKVAAPGRVDMKSNMEELIHHFKLFTEGFHVPEGEAYAAVEHPKGEFGIYLVSDGANKPYRLKIRAPGFAHLAAMDEMSRGHMIADAVAVIGTMDIVFGEIDR.

Belongs to the complex I 49 kDa subunit family. As to quaternary structure, NDH-1 is composed of 14 different subunits. Subunits NuoB, C, D, E, F, and G constitute the peripheral sector of the complex.

It is found in the cell inner membrane. The catalysed reaction is a quinone + NADH + 5 H(+)(in) = a quinol + NAD(+) + 4 H(+)(out). NDH-1 shuttles electrons from NADH, via FMN and iron-sulfur (Fe-S) centers, to quinones in the respiratory chain. The immediate electron acceptor for the enzyme in this species is believed to be ubiquinone. Couples the redox reaction to proton translocation (for every two electrons transferred, four hydrogen ions are translocated across the cytoplasmic membrane), and thus conserves the redox energy in a proton gradient. The sequence is that of NADH-quinone oxidoreductase subunit D from Methylibium petroleiphilum (strain ATCC BAA-1232 / LMG 22953 / PM1).